The following is a 636-amino-acid chain: Chaperone protein DnaK (636 aa).

Residue Thr203 is modified to Phosphothreonine; by autocatalysis. A disordered region spans residues 602 to 636; sequence VYGKQQEGAPAQEEPSAEGKKADDEGTVEGEFREV. The segment covering 618–636 has biased composition (basic and acidic residues); sequence AEGKKADDEGTVEGEFREV.

It belongs to the heat shock protein 70 family.

Functionally, acts as a chaperone. This Dehalococcoides mccartyi (strain CBDB1) protein is Chaperone protein DnaK.